We begin with the raw amino-acid sequence, 172 residues long: Dual-action ribosomal maturation protein DarP (172 aa).

Belongs to the DarP family.

It is found in the cytoplasm. Functionally, member of a network of 50S ribosomal subunit biogenesis factors which assembles along the 30S-50S interface, preventing incorrect 23S rRNA structures from forming. Promotes peptidyl transferase center (PTC) maturation. This Ectopseudomonas mendocina (strain ymp) (Pseudomonas mendocina) protein is Dual-action ribosomal maturation protein DarP.